We begin with the raw amino-acid sequence, 257 residues long: Indole-3-glycerol phosphate synthase (257 aa).

Belongs to the TrpC family.

The catalysed reaction is 1-(2-carboxyphenylamino)-1-deoxy-D-ribulose 5-phosphate + H(+) = (1S,2R)-1-C-(indol-3-yl)glycerol 3-phosphate + CO2 + H2O. The protein operates within amino-acid biosynthesis; L-tryptophan biosynthesis; L-tryptophan from chorismate: step 4/5. This Chlorobium chlorochromatii (strain CaD3) protein is Indole-3-glycerol phosphate synthase.